We begin with the raw amino-acid sequence, 354 residues long: Guanine nucleotide-binding protein G(o) subunit alpha (354 aa).

Glycine 2 carries the N-myristoyl glycine lipid modification. Cysteine 3 carries S-palmitoyl cysteine lipidation. Residues lysine 32–tyrosine 354 enclose the G-alpha domain. The interval lysine 35–threonine 48 is G1 motif. Residues glycine 40–serine 47, leucine 176–threonine 182, aspartate 201–glutamine 205, asparagine 270–aspartate 273, and alanine 326 contribute to the GTP site. Serine 47 and threonine 182 together coordinate Mg(2+). The G2 motif stretch occupies residues aspartate 174–threonine 182. The segment at phenylalanine 197–arginine 206 is G3 motif. The tract at residues isoleucine 266 to aspartate 273 is G4 motif. The G5 motif stretch occupies residues threonine 324–threonine 329.

It belongs to the G-alpha family. G(i/o/t/z) subfamily. G proteins are composed of 3 units; alpha, beta and gamma. The alpha chain contains the guanine nucleotide binding site.

In terms of biological role, guanine nucleotide-binding proteins (G proteins) are involved as modulators or transducers in various transmembrane signaling systems. The G(o) protein function is not clear. This Lymnaea stagnalis (Great pond snail) protein is Guanine nucleotide-binding protein G(o) subunit alpha.